The following is a 164-amino-acid chain: MADTDDIIDYESDDLTEYEDDEEEEEDGESLETSDIDPKSSYKIVESASTHIEDAHSNLKHIGNHISALKRRYTRRISLFEIAGIIAESYNLLQRGRLPLVSEFSDETMKQNMLHVIIQEIEEGSCPIVIEKNGELLSVNDFDKDGLKFHLDYIIKIWKLQKRY.

Residues 1–35 (MADTDDIIDYESDDLTEYEDDEEEEEDGESLETSD) are compositionally biased toward acidic residues. The segment at 1-39 (MADTDDIIDYESDDLTEYEDDEEEEEDGESLETSDIDPK) is disordered.

This sequence belongs to the poxviridae DNA-directed RNA polymerase 19 kDa subunit family. In terms of assembly, the DNA-dependent RNA polymerase used for intermediate and late genes expression consists of eight subunits Rpo30/OPG66, Rpo7/OPG90, Rpo22/OPG103, Rpo147/OPG105, Rpo18/OPG119, Rpo19/OPG131, Rpo132/OPG151 and Rpo35/OPG156. The same holoenzyme, with the addition of the transcription-specificity factor OPG109, is used for early gene expression.

Its subcellular location is the virion. The catalysed reaction is RNA(n) + a ribonucleoside 5'-triphosphate = RNA(n+1) + diphosphate. In terms of biological role, part of the DNA-dependent RNA polymerase which catalyzes the transcription of viral DNA into RNA using the four ribonucleoside triphosphates as substrates. Responsible for the transcription of early, intermediate and late genes. DNA-dependent RNA polymerase associates with the early transcription factor (ETF), itself composed of OPG118 and OPG133, thereby allowing the early genes transcription. Late transcription, and probably also intermediate transcription, require newly synthesized RNA polymerase. This Homo sapiens (Human) protein is DNA-directed RNA polymerase 19 kDa subunit (OPG131).